Here is a 101-residue protein sequence, read N- to C-terminus: Conopressin/conophysin, isoform 3 (101 aa).

Residue alanine 1 is a signal peptide. Cysteine 2 and cysteine 7 are disulfide-bonded. Residue glycine 10 is modified to Glycine amide. Positions 11 to 18 (GKRNVDEG) are excised as a propeptide. Disulfide bonds link cysteine 23/cysteine 63, cysteine 26/cysteine 37, cysteine 31/cysteine 53, cysteine 38/cysteine 43, cysteine 70/cysteine 88, cysteine 82/cysteine 100, and cysteine 89/cysteine 94.

It belongs to the vasopressin/oxytocin family. Expressed by the venom gland.

Its subcellular location is the secreted. In terms of biological role, targets vasopressin-oxytocin related receptors. Is more active on fish receptors than on their human counterparts, supporting an evolved role of this conopressin in the envenomation process. Acts as an agonist on zebrafish vasopressin receptors V1a1R (EC(50)=10.6 nM), V1a2R (EC(50)=44.06 nM, partial agonist), V2R (EC(50)=299.2 nM) and oxytocin receptor (EC(50)=353.73 nM, partial agonist). Shows a weaker activity on human receptors AVPR1B (EC(50)=51.92 nM), AVPR1A (EC(50)=123.78 nM), AVPR2 (EC(50)=299.2 nM) and oxytocin (OXTR) receptor (EC(50)=455.66 nM, partial agonist). In vivo, exhibits grooming and scratching behavior in mice, following intracerebral injection. This is Conopressin/conophysin, isoform 3 from Conus monile (Necklace cone).